We begin with the raw amino-acid sequence, 196 residues long: Adenylate kinase (196 aa).

ATP is bound at residue 9-17; sequence GIPGVGKST.

It belongs to the archaeal adenylate kinase family.

Its subcellular location is the cytoplasm. The enzyme catalyses AMP + ATP = 2 ADP. In Pyrococcus furiosus (strain ATCC 43587 / DSM 3638 / JCM 8422 / Vc1), this protein is Adenylate kinase.